A 1089-amino-acid polypeptide reads, in one-letter code: WD repeat-containing protein on Y chromosome (1089 aa).

7 WD repeats span residues 155 to 199 (EEVA…IRTA), 207 to 249 (PHAV…RGPF), 329 to 368 (RIPL…EPSA), 372 to 411 (GHNG…LLQT), 462 to 501 (THAA…RKII), 514 to 553 (TIDI…VIRN), and 601 to 641 (FHTD…RRYS). Positions 661–684 (KRSKRWASRAPHSGSHMMSHTGSH) are disordered. A compositionally biased stretch (low complexity) spans 672–684 (HSGSHMMSHTGSH). 2 WD repeats span residues 767-806 (KTGD…IPEA) and 850-889 (GHLK…LGTL). A disordered region spans residues 1049 to 1089 (LNIKLPSRRRSDRTNDPRNMRTAKTRGDMGLGHRSSHTSQN).

The sequence is that of WD repeat-containing protein on Y chromosome from Drosophila willistoni (Fruit fly).